We begin with the raw amino-acid sequence, 577 residues long: Proline--tRNA ligase (577 aa).

Belongs to the class-II aminoacyl-tRNA synthetase family. ProS type 1 subfamily. Homodimer.

The protein resides in the cytoplasm. The enzyme catalyses tRNA(Pro) + L-proline + ATP = L-prolyl-tRNA(Pro) + AMP + diphosphate. Catalyzes the attachment of proline to tRNA(Pro) in a two-step reaction: proline is first activated by ATP to form Pro-AMP and then transferred to the acceptor end of tRNA(Pro). As ProRS can inadvertently accommodate and process non-cognate amino acids such as alanine and cysteine, to avoid such errors it has two additional distinct editing activities against alanine. One activity is designated as 'pretransfer' editing and involves the tRNA(Pro)-independent hydrolysis of activated Ala-AMP. The other activity is designated 'posttransfer' editing and involves deacylation of mischarged Ala-tRNA(Pro). The misacylated Cys-tRNA(Pro) is not edited by ProRS. In Thermotoga maritima (strain ATCC 43589 / DSM 3109 / JCM 10099 / NBRC 100826 / MSB8), this protein is Proline--tRNA ligase.